The sequence spans 517 residues: Glutamate--cysteine ligase (517 aa).

Belongs to the glutamate--cysteine ligase type 1 family. Type 1 subfamily.

It carries out the reaction L-cysteine + L-glutamate + ATP = gamma-L-glutamyl-L-cysteine + ADP + phosphate + H(+). It participates in sulfur metabolism; glutathione biosynthesis; glutathione from L-cysteine and L-glutamate: step 1/2. The polypeptide is Glutamate--cysteine ligase (Pectobacterium atrosepticum (strain SCRI 1043 / ATCC BAA-672) (Erwinia carotovora subsp. atroseptica)).